The primary structure comprises 291 residues: tRNA N(3)-cytidine methyltransferase METTL8, mitochondrial (291 aa).

A mitochondrion-targeting transit peptide spans M1–Y21. K80 participates in a covalent cross-link: Glycyl lysine isopeptide (Lys-Gly) (interchain with G-Cter in SUMO). Positions 89 and 93 each coordinate S-adenosyl-L-methionine. Positions F141–E187 are disordered. Over residues S159 to K168 the composition is skewed to low complexity. G204, D230, and D256 together coordinate S-adenosyl-L-methionine.

Belongs to the methyltransferase superfamily. METL family. As to quaternary structure, interacts with EP300.

It is found in the mitochondrion. The catalysed reaction is cytidine(32) in tRNA(Ser) + S-adenosyl-L-methionine = N(3)-methylcytidine(32) in tRNA(Ser) + S-adenosyl-L-homocysteine + H(+). It carries out the reaction cytidine(32) in tRNA(Thr) + S-adenosyl-L-methionine = N(3)-methylcytidine(32) in tRNA(Thr) + S-adenosyl-L-homocysteine + H(+). The enzyme catalyses a cytidine in mRNA + S-adenosyl-L-methionine = an N(3)-methylcytidine in mRNA + S-adenosyl-L-homocysteine + H(+). In terms of biological role, mitochondrial S-adenosyl-L-methionine-dependent methyltransferase that mediates N(3)-methylcytidine modification of residue 32 of the tRNA anticodon loop of mitochondrial tRNA(Ser)(UCN) and tRNA(Thr). N(3)-methylcytidine methylation modification regulates mitochondrial translation efficiency and is required for activity of the respiratory chain. N(3)-methylcytidine methylation of mitochondrial tRNA(Ser)(UCN) requires the formation of N(6)-dimethylallyladenosine(37) (i6A37) by TRIT1 as prerequisite. May also mediate N(3)-methylcytidine modification of mRNAs. The existence of N(3)-methylcytidine modification on mRNAs is however unclear, and additional evidences are required to confirm the role of the N(3)-methylcytidine-specific mRNA methyltransferase activity of METTL8 in vivo. In Homo sapiens (Human), this protein is tRNA N(3)-cytidine methyltransferase METTL8, mitochondrial.